The chain runs to 457 residues: Cysteine desulfurase (457 aa).

Pyridoxal 5'-phosphate contacts are provided by A127, T128, Q235, S255, and H257. K258 carries the N6-(pyridoxal phosphate)lysine modification. T295 is a binding site for pyridoxal 5'-phosphate. Residue C381 is the Cysteine persulfide intermediate of the active site. C381 lines the [2Fe-2S] cluster pocket. Position 381 (C381) interacts with Zn(2+). C381 is subject to Cysteine persulfide.

It belongs to the class-V pyridoxal-phosphate-dependent aminotransferase family. NifS/IscS subfamily. As to quaternary structure, homodimer. Component of the mitochondrial core iron-sulfur cluster (ISC) complex composed of NFS1, LYRM4, NDUFAB1, ISCU, FXN, and FDX2; this complex is a heterohexamer containing two copies of each monomer. Component of cyteine desulfurase complex composed of NFS1, LYRM4 and NDUFAB1; this complex contributes to the activation of cysteine desulfurase activity and NFS1 stabilization. Interacts (homodimer form) with ISCU (D-state); each monomer interacts with the C-terminal regions of each NFS1 monomer. Interacts with HSPA9. Interacts (via homodimer form) with FDX2. Interacts (via homodimer form) with FXN. Interacts with LYRM4. Component of a complex composed of FXN, NFS1, LYRM4 and ISCU. Monomer. Homodimer. Oligomer. Interacts with ISCU. Component of the cysteine desulfurase complex composed of NFS1 and LYRM4; this complex contributes to the activation of cysteine desulfurase activity. Interacts with MOCS3. The cofactor is pyridoxal 5'-phosphate. N-gluconoylated. In terms of processing, cysteine persulfide intermediate is reduced by thiol-containing molecules like glutathione and L-cysteine. Persulfide reduction is a rate-limiting step of cysteine desulfurase catalytic cycle. In terms of tissue distribution, predominantly expressed in heart and skeletal muscle. Also found in brain, liver and pancreas.

The protein resides in the mitochondrion. The protein localises to the cytoplasm. It localises to the nucleus. It is found in the cytoskeleton. Its subcellular location is the microtubule organizing center. The protein resides in the centrosome. It carries out the reaction (sulfur carrier)-H + L-cysteine = (sulfur carrier)-SH + L-alanine. The catalysed reaction is L-cysteinyl-[cysteine desulfurase] + L-cysteine = S-sulfanyl-L-cysteinyl-[cysteine desulfurase] + L-alanine. Active only in complex with LYRM4. Functionally, cysteine desulfurase, of the core iron-sulfur cluster (ISC) assembly complex, that catalyzes the desulfuration of L-cysteine to L-alanine, as component of the cysteine desulfurase complex, leading to the formation of a cysteine persulfide intermediate at the active site cysteine residue and participates in the [2Fe-2S] clusters assembly on the scaffolding protein ISCU. The persulfide is then transferred on the flexible Cys loop from the catalytic site of NFS1 to the surface of NFS1. After the NFS1-linked persulfide sulfur is transferred to one of the conserved Cys residues of the scaffold, a reaction assisted by FXN. The core iron-sulfur cluster (ISC) assembly complex is involved in the de novo synthesis of a [2Fe-2S] cluster, the first step of the mitochondrial iron-sulfur protein biogenesis. This process is initiated by the cysteine desulfurase complex (NFS1:LYRM4:NDUFAB1) that produces persulfide which is delivered on the scaffold protein ISCU in a FXN-dependent manner. Then this complex is stabilized by FDX2 which provides reducing equivalents to accomplish the [2Fe-2S] cluster assembly. Finally, the [2Fe-2S] cluster is transferred from ISCU to chaperone proteins, including HSCB, HSPA9 and GLRX5. Its function is as follows. May catalyze the desulfuration of L-cysteine to L-alanine as component of the cysteine desulfurase complex (NFS1:LYRM4), leading to the formation of a cysteine persulfide intermediate. Acts as a sulfur donor for MOCS3 by transferring the sulfur of the cysteine persulfide intermediate on MOCS3. The polypeptide is Cysteine desulfurase (Homo sapiens (Human)).